Consider the following 253-residue polypeptide: Triosephosphate isomerase (253 aa).

A substrate-binding site is contributed by 9-11; the sequence is NWK. His97 (electrophile) is an active-site residue. The active-site Proton acceptor is the Glu169. Substrate-binding positions include Gly175, Ser215, and 236–237; that span reads GG.

This sequence belongs to the triosephosphate isomerase family. Homodimer.

Its subcellular location is the cytoplasm. It carries out the reaction D-glyceraldehyde 3-phosphate = dihydroxyacetone phosphate. It functions in the pathway carbohydrate biosynthesis; gluconeogenesis. The protein operates within carbohydrate degradation; glycolysis; D-glyceraldehyde 3-phosphate from glycerone phosphate: step 1/1. Functionally, involved in the gluconeogenesis. Catalyzes stereospecifically the conversion of dihydroxyacetone phosphate (DHAP) to D-glyceraldehyde-3-phosphate (G3P). This is Triosephosphate isomerase from Staphylococcus aureus (strain NCTC 8325 / PS 47).